A 261-amino-acid polypeptide reads, in one-letter code: 14-3-3 protein 8 (261 aa).

The interval 237–261 is disordered; sequence DIPEDGEEAPKGDAANKVGAGEDAE.

This sequence belongs to the 14-3-3 family. As to quaternary structure, homodimer.

This Solanum lycopersicum (Tomato) protein is 14-3-3 protein 8 (TFT8).